Consider the following 290-residue polypeptide: Potassium-transporting ATPase subunit beta (290 aa).

Residues 1–36 (MAALQEKKSCSQRMEEFQRYCWNPDTGQMLGRTLSR) are Cytoplasmic-facing. A helical; Signal-anchor for type II membrane protein transmembrane segment spans residues 37–57 (WVWISLYYVAFYVVMTGIFAL). Residues 58-290 (CIYTLMCTLD…KVEFKLTIQQ (233 aa)) are Extracellular-facing. N-linked (GlcNAc...) asparagine glycans are attached at residues asparagine 99, asparagine 103, asparagine 130, asparagine 146, and asparagine 161. Residues cysteine 131 and cysteine 152 are joined by a disulfide bond. An intrachain disulfide couples cysteine 162 to cysteine 178. 2 N-linked (GlcNAc...) asparagine glycosylation sites follow: asparagine 193 and asparagine 221. Residues 194-290 (STAPRADCTF…KVEFKLTIQQ (97 aa)) are immunoglobulin-like. Cysteine 201 and cysteine 262 form a disulfide bridge.

The protein belongs to the X(+)/potassium ATPases subunit beta family. The ATPase pump is composed of two subunits: alpha (catalytic) and beta (regulatory). Interacts with alpha subunit ATP12A; this interaction is required for the formation of a functionally active pump and targeting at the plasma membrane. Interacts (via N-terminus) with alpha subunit ATP4A (via the P-domain). N-glycosylation is necessary for assembly and functional expression of the pump at the plasma membrane.

It localises to the apical cell membrane. It is found in the cell membrane. Functionally, the beta subunit of the gastric H(+)/K(+) ATPase pump which transports H(+) ions in exchange for K(+) ions across the apical membrane of parietal cells. Plays a structural and regulatory role in the assembly and membrane targeting of a functionally active pump. Within a transport cycle, the transfer of a H(+) ion across the membrane is coupled to ATP hydrolysis and is associated with a transient phosphorylation of the alpha subunit that shifts the pump conformation from inward-facing (E1) to outward-facing state (E2). Interacts with the phosphorylation domain of the alpha subunit and functions as a ratchet, stabilizing the lumenal-open E2 conformation and preventing the reverse reaction of the transport cycle. The protein is Potassium-transporting ATPase subunit beta (ATP4B) of Canis lupus familiaris (Dog).